Here is a 459-residue protein sequence, read N- to C-terminus: Argininosuccinate lyase (459 aa).

The protein belongs to the lyase 1 family. Argininosuccinate lyase subfamily.

It localises to the cytoplasm. The catalysed reaction is 2-(N(omega)-L-arginino)succinate = fumarate + L-arginine. Its pathway is amino-acid biosynthesis; L-arginine biosynthesis; L-arginine from L-ornithine and carbamoyl phosphate: step 3/3. This chain is Argininosuccinate lyase, found in Prochlorococcus marinus subsp. pastoris (strain CCMP1986 / NIES-2087 / MED4).